The chain runs to 279 residues: Acetylglutamate kinase (279 aa).

Residues 64-65 (GG), arginine 86, and asparagine 177 contribute to the substrate site.

It belongs to the acetylglutamate kinase family. ArgB subfamily.

It is found in the cytoplasm. The enzyme catalyses N-acetyl-L-glutamate + ATP = N-acetyl-L-glutamyl 5-phosphate + ADP. Its pathway is amino-acid biosynthesis; L-arginine biosynthesis; N(2)-acetyl-L-ornithine from L-glutamate: step 2/4. In terms of biological role, catalyzes the ATP-dependent phosphorylation of N-acetyl-L-glutamate. The polypeptide is Acetylglutamate kinase (Campylobacter jejuni subsp. jejuni serotype O:6 (strain 81116 / NCTC 11828)).